Consider the following 894-residue polypeptide: Transcriptional activator/repressor GIS1 (894 aa).

Residues 12 to 53 (VPVFKPSMMEFANFQYFIDEITKFGIENGIVKVIPPKEWLEL) form the JmjN domain. S70 carries the phosphoserine modification. Residues 90-110 (ENEYDNKSYNLTQWKNLAESL) adopt a coiled-coil conformation. Residues 170-324 (PYDLTLWNLN…VRKQPLKCGC (155 aa)) enclose the JmjC domain. The Bipartite nuclear localization signal signature appears at 316-332 (RKQPLKCGCGNKKEERK). Residues 324–355 (CGNKKEERKSGPFSNLSYDSNESEQRGSITDN) are disordered. Residues 335-354 (PFSNLSYDSNESEQRGSITD) are compositionally biased toward polar residues. S343 is subject to Phosphoserine. Positions 361–385 (QKVRSFDELLNHSSQELQNLEDNKN) form a coiled coil. Residues 521–554 (NISSTNNSANNSSSNNNVSTVPSSMMHSSTLNGT) show a composition bias toward low complexity. The tract at residues 521–558 (NISSTNNSANNSSSNNNVSTVPSSMMHSSTLNGTSGLG) is disordered. S690, S694, S696, S734, and S747 each carry phosphoserine. Positions 756-768 (LNGNDNSNLDSNN) are enriched in low complexity. Residues 756 to 810 (LNGNDNSNLDSNNFDYSFTGNKQESNPSILNNNTNNNDNYRTSSMNNNGNNYQAH) form a disordered region. Composition is skewed to polar residues over residues 769-785 (FDYS…PSIL) and 795-810 (YRTS…YQAH). A C2H2-type 1 zinc finger spans residues 828-851 (YICRECNRQFSSGHHLTRHKKSVH). The C2H2-type 2; atypical zinc-finger motif lies at 857–882 (HSCPRCGKRFKRRDHVLQHLNKKIPC).

It is found in the nucleus. Functionally, transcription factor involved in the regulation of gene expression upon nutrient starvation. Recognizes and binds to the post-diauxic-shift element 5'-T[AT]AGGGAT-3' in the promoter region. Can act as a transcriptional activator (e.g. of stress genes like SSA3, HSP12 and HSP26) as well as a repressor (e.g. of pyrophosphate phosphatase DPP1). GIS1 also acts as a DNA damage-responsive transcriptional repressor of photolyase PHR1. The protein is Transcriptional activator/repressor GIS1 (GIS1) of Saccharomyces cerevisiae (strain ATCC 204508 / S288c) (Baker's yeast).